The sequence spans 428 residues: Glutamyl-tRNA reductase (428 aa).

Residues 55–58 (TCNR), serine 114, 119–121 (ETQ), and glutamine 125 contribute to the substrate site. Cysteine 56 functions as the Nucleophile in the catalytic mechanism. Residue 194-199 (GAGEMI) participates in NADP(+) binding.

Belongs to the glutamyl-tRNA reductase family. As to quaternary structure, homodimer.

The enzyme catalyses (S)-4-amino-5-oxopentanoate + tRNA(Glu) + NADP(+) = L-glutamyl-tRNA(Glu) + NADPH + H(+). Its pathway is porphyrin-containing compound metabolism; protoporphyrin-IX biosynthesis; 5-aminolevulinate from L-glutamyl-tRNA(Glu): step 1/2. In terms of biological role, catalyzes the NADPH-dependent reduction of glutamyl-tRNA(Glu) to glutamate 1-semialdehyde (GSA). The chain is Glutamyl-tRNA reductase from Paraburkholderia xenovorans (strain LB400).